The chain runs to 623 residues: Sulfite reductase [NADPH] flavoprotein alpha-component (623 aa).

The disordered stretch occupies residues Met-1–Asp-32. Residues Leu-87 to Leu-225 form the Flavodoxin-like domain. FMN-binding positions include Ser-93 to Ala-98, Ser-140 to Gly-143, and Leu-176 to Cys-185. The FAD-binding FR-type domain occupies Gln-258 to Pro-472. FAD-binding positions include Thr-346, Ala-380, Arg-410–Ser-413, Thr-428–Gly-430, Tyr-434, and Gly-443–Ser-446. NADP(+) is bound by residues Ser-543–Arg-544, Lys-549–Gln-553, and Asp-585. Tyr-623 contacts FAD.

It belongs to the NADPH-dependent sulphite reductase flavoprotein subunit CysJ family. In the N-terminal section; belongs to the flavodoxin family. The protein in the C-terminal section; belongs to the flavoprotein pyridine nucleotide cytochrome reductase family. As to quaternary structure, alpha(8)-beta(8). The alpha component is a flavoprotein, the beta component is a hemoprotein. FAD is required as a cofactor. It depends on FMN as a cofactor.

It catalyses the reaction hydrogen sulfide + 3 NADP(+) + 3 H2O = sulfite + 3 NADPH + 4 H(+). Its pathway is sulfur metabolism; hydrogen sulfide biosynthesis; hydrogen sulfide from sulfite (NADPH route): step 1/1. Component of the sulfite reductase complex that catalyzes the 6-electron reduction of sulfite to sulfide. This is one of several activities required for the biosynthesis of L-cysteine from sulfate. The flavoprotein component catalyzes the electron flow from NADPH -&gt; FAD -&gt; FMN to the hemoprotein component. The protein is Sulfite reductase [NADPH] flavoprotein alpha-component of Vibrio parahaemolyticus serotype O3:K6 (strain RIMD 2210633).